Consider the following 310-residue polypeptide: NAD-dependent protein deacylase sirtuin-5, mitochondrial (310 aa).

A mitochondrion-targeting transit peptide spans 1-36 (MQPLQIAPCRLLYGLYRGLKSPASTGTRICPAMARP). Positions 37–307 (SSNMADFRKL…PEALAPHETG (271 aa)) constitute a Deacetylase sirtuin-type domain. An NAD(+)-binding site is contributed by 58–77 (GAGVSAESGVPTFRGAGGYW). Residues Tyr-102 and Arg-105 each coordinate substrate. Position 140-143 (140-143 (QNID)) interacts with NAD(+). Residue His-158 is the Proton acceptor of the active site. Zn(2+) is bound by residues Cys-166, Cys-169, Cys-207, and Cys-212. NAD(+) contacts are provided by residues 249 to 251 (GTS), 275 to 277 (NME), and Cys-293.

This sequence belongs to the sirtuin family. Class III subfamily. As to quaternary structure, monomer. Homodimer. Interacts with CPS1. Interacts with PCCA. The cofactor is Zn(2+).

Its subcellular location is the mitochondrion. The protein resides in the cytoplasm. It localises to the cytosol. The protein localises to the nucleus. It catalyses the reaction N(6)-malonyl-L-lysyl-[protein] + NAD(+) + H2O = 2''-O-malonyl-ADP-D-ribose + nicotinamide + L-lysyl-[protein]. It carries out the reaction N(6)-succinyl-L-lysyl-[protein] + NAD(+) + H2O = 2''-O-succinyl-ADP-D-ribose + nicotinamide + L-lysyl-[protein]. The enzyme catalyses N(6)-glutaryl-L-lysyl-[protein] + NAD(+) + H2O = 2''-O-glutaryl-ADP-D-ribose + nicotinamide + L-lysyl-[protein]. NAD-dependent lysine demalonylase, desuccinylase and deglutarylase that specifically removes malonyl, succinyl and glutaryl groups on target proteins. Activates CPS1 and contributes to the regulation of blood ammonia levels during prolonged fasting: acts by mediating desuccinylation and deglutarylation of CPS1, thereby increasing CPS1 activity in response to elevated NAD levels during fasting. Activates SOD1 by mediating its desuccinylation, leading to reduced reactive oxygen species. Activates SHMT2 by mediating its desuccinylation. Modulates ketogenesis through the desuccinylation and activation of HMGCS2. Has weak NAD-dependent protein deacetylase activity; however this activity may not be physiologically relevant in vivo. Can deacetylate cytochrome c (CYCS) and a number of other proteins in vitro such as UOX. The chain is NAD-dependent protein deacylase sirtuin-5, mitochondrial from Canis lupus familiaris (Dog).